The following is a 578-amino-acid chain: Sulfite reductase [NADPH] hemoprotein beta-component (578 aa).

Positions 441, 447, 487, and 491 each coordinate [4Fe-4S] cluster. C491 serves as a coordination point for siroheme.

The protein belongs to the nitrite and sulfite reductase 4Fe-4S domain family. Alpha(8)-beta(8). The alpha component is a flavoprotein, the beta component is a hemoprotein. Requires siroheme as cofactor. The cofactor is [4Fe-4S] cluster.

The enzyme catalyses hydrogen sulfide + 3 NADP(+) + 3 H2O = sulfite + 3 NADPH + 4 H(+). It participates in sulfur metabolism; hydrogen sulfide biosynthesis; hydrogen sulfide from sulfite (NADPH route): step 1/1. Its function is as follows. Component of the sulfite reductase complex that catalyzes the 6-electron reduction of sulfite to sulfide. This is one of several activities required for the biosynthesis of L-cysteine from sulfate. This Vibrio vulnificus (strain YJ016) protein is Sulfite reductase [NADPH] hemoprotein beta-component.